The sequence spans 495 residues: Alpha-1B-glycoprotein (495 aa).

The signal sequence occupies residues 1–21 (MSMLVVFLLLWGVTWGPVTEA). Ig-like V-type domains follow at residues 22–113 (AIFY…LTGP), 114–206 (KSLP…ELAA), 207–299 (PPPP…PVEL), 300–397 (ILSD…LHVD), and 398–495 (GPPP…VAES). N-linked (GlcNAc...) (complex) asparagine glycosylation occurs at Asn44. 5 cysteine pairs are disulfide-bonded: Cys49-Cys93, Cys139-Cys182, Cys232-Cys279, Cys325-Cys374, and Cys423-Cys470. Asn179 carries an N-linked (GlcNAc...) asparagine glycan. 2 N-linked (GlcNAc...) asparagine glycosylation sites follow: Asn363 and Asn371.

In terms of assembly, interacts with CRISP3. As to expression, plasma.

It localises to the secreted. This Homo sapiens (Human) protein is Alpha-1B-glycoprotein (A1BG).